Here is a 59-residue protein sequence, read N- to C-terminus: Large ribosomal subunit protein uL30 (59 aa).

It belongs to the universal ribosomal protein uL30 family. In terms of assembly, part of the 50S ribosomal subunit.

In Yersinia pseudotuberculosis serotype I (strain IP32953), this protein is Large ribosomal subunit protein uL30.